The primary structure comprises 583 residues: ATP-dependent lipid A-core flippase (583 aa).

The next 5 membrane-spanning stretches (helical) occupy residues 27–47 (LAVA…MVSL), 69–89 (LLVF…TYCL), 142–162 (ALVS…LMFY), 165–185 (WQLS…IGFV), and 249–269 (AAAN…VLYL). One can recognise an ABC transmembrane type-1 domain in the interval 28 to 310 (AVAVVALIIN…LTNVTSQFQR (283 aa)). The region spanning 342–578 (VNVKDISFTY…DGAYAQLHRI (237 aa)) is the ABC transporter domain. Residue 376–383 (GRSGSGKS) coordinates ATP.

It belongs to the ABC transporter superfamily. Lipid exporter (TC 3.A.1.106) family. In terms of assembly, homodimer.

It is found in the cell inner membrane. The enzyme catalyses ATP + H2O + lipid A-core oligosaccharideSide 1 = ADP + phosphate + lipid A-core oligosaccharideSide 2.. Functionally, involved in lipopolysaccharide (LPS) biosynthesis. Translocates lipid A-core from the inner to the outer leaflet of the inner membrane. Transmembrane domains (TMD) form a pore in the inner membrane and the ATP-binding domain (NBD) is responsible for energy generation. This Vibrio vulnificus (strain CMCP6) protein is ATP-dependent lipid A-core flippase.